We begin with the raw amino-acid sequence, 1327 residues long: uncharacterized protein (1327 aa).

Position 884 to 885 (Trp884 to Asp885) interacts with substrate. The Proton donor role is filled by Glu1023. A substrate-binding site is contributed by Lys1143–Gln1144.

It in the N-terminal section; belongs to the trehalose phosphatase family. In the C-terminal section; belongs to the glycosyl hydrolase 65 family.

This is an uncharacterized protein from Mycobacterium tuberculosis (strain CDC 1551 / Oshkosh).